The primary structure comprises 144 residues: MRLNTIKPGEGSKKTAKRVGRGIGSGLGKTCGRGHKGQKSRSGGFHKVGFEGGQMPLQRRLPKRGFNSLTRARNYEVRLTDLDRLPVDEIDLLALQVAGIVPGDALSAKVILSGAISRKVVLKGVGATKGAKAAIEAVGGSIAE.

The segment at 1-54 (MRLNTIKPGEGSKKTAKRVGRGIGSGLGKTCGRGHKGQKSRSGGFHKVGFEGGQ) is disordered. Positions 21 to 31 (RGIGSGLGKTC) are enriched in gly residues.

The protein belongs to the universal ribosomal protein uL15 family. As to quaternary structure, part of the 50S ribosomal subunit.

In terms of biological role, binds to the 23S rRNA. In Dechloromonas aromatica (strain RCB), this protein is Large ribosomal subunit protein uL15.